The following is a 297-amino-acid chain: Protoheme IX farnesyltransferase (297 aa).

A run of 8 helical transmembrane segments spans residues 15 to 35 (VVAL…PAPY), 39 to 59 (GLLV…AAVF), 91 to 111 (VWGV…VNII), 112 to 132 (TVVL…LYLK), 139 to 159 (IVIG…AVSG), 166 to 186 (ACLL…ALAI), 220 to 240 (LLLV…YLVI), and 265 to 285 (AWST…ALLF).

It belongs to the UbiA prenyltransferase family. Protoheme IX farnesyltransferase subfamily.

The protein resides in the cell inner membrane. The catalysed reaction is heme b + (2E,6E)-farnesyl diphosphate + H2O = Fe(II)-heme o + diphosphate. It functions in the pathway porphyrin-containing compound metabolism; heme O biosynthesis; heme O from protoheme: step 1/1. In terms of biological role, converts heme B (protoheme IX) to heme O by substitution of the vinyl group on carbon 2 of heme B porphyrin ring with a hydroxyethyl farnesyl side group. The sequence is that of Protoheme IX farnesyltransferase from Vesicomyosocius okutanii subsp. Calyptogena okutanii (strain HA).